The primary structure comprises 415 residues: Runt-related transcription factor 3 (415 aa).

Disordered regions lie at residues 1-48, 176-266, and 375-415; these read MRIP…GGRA, GPRE…FPDP, and NLMN…WRPY. A Runt domain is found at 54–182; the sequence is SMVDVLADHA…TVDGPREPRR (129 aa). Residues 186–205 are compositionally biased toward basic and acidic residues; the sequence is KLEDQTKPFPDRFGDLERLR. Residue K192 forms a Glycyl lysine isopeptide (Lys-Gly) (interchain with G-Cter in SUMO2) linkage. Positions 209–240 are enriched in polar residues; it reads TPSTPSPRGSLSTTSHFSSQPQTPIQGTSELN. S243 bears the Phosphoserine mark. The span at 393–402 shows a compositional bias: polar residues; it reads SHSNSPTALS. A compositionally biased stretch (basic and acidic residues) spans 406–415; the sequence is RMDEAVWRPY.

As to quaternary structure, heterodimer with CBFB. RUNX3 binds DNA as a monomer and through the Runt domain. DNA-binding is increased by heterodimerization. Interacts with TLE1 and SUV39H1. The tyrosine phosphorylated form (via runt domain) interacts with SRC (via protein kinase domain). Interacts with FYN and LCK. Interacts with FOXP3. Interacts with ZFHX3. Interacts with TBX21. Post-translationally, phosphorylated on tyrosine residues by SRC. Phosphorylated by LCK and FYN. In terms of tissue distribution, expressed in gastric cancer tissues (at protein level).

The protein resides in the nucleus. The protein localises to the cytoplasm. Forms the heterodimeric complex core-binding factor (CBF) with CBFB. RUNX members modulate the transcription of their target genes through recognizing the core consensus binding sequence 5'-TGTGGT-3', or very rarely, 5'-TGCGGT-3', within their regulatory regions via their runt domain, while CBFB is a non-DNA-binding regulatory subunit that allosterically enhances the sequence-specific DNA-binding capacity of RUNX. The heterodimers bind to the core site of a number of enhancers and promoters, including murine leukemia virus, polyomavirus enhancer, T-cell receptor enhancers, LCK, IL3 and GM-CSF promoters. May be involved in the control of cellular proliferation and/or differentiation. In association with ZFHX3, up-regulates CDKN1A promoter activity following TGF-beta stimulation. CBF complexes repress ZBTB7B transcription factor during cytotoxic (CD8+) T cell development. They bind to RUNX-binding sequence within the ZBTB7B locus acting as transcriptional silencer and allowing for cytotoxic T cell differentiation. CBF complexes binding to the transcriptional silencer is essential for recruitment of nuclear protein complexes that catalyze epigenetic modifications to establish epigenetic ZBTB7B silencing. Necessary for the development and survival of sensory neurons expressing parvalbumin. The polypeptide is Runt-related transcription factor 3 (RUNX3) (Homo sapiens (Human)).